The chain runs to 431 residues: MANSC domain-containing protein 1 (431 aa).

The N-terminal stretch at 1–26 is a signal peptide; it reads MFFGGKGSLTYTLVIICFLTLRLAAS. The Extracellular segment spans residues 27-385; the sequence is QNCLNKSLED…QYGLPFEKWL (359 aa). Asparagine 31 is a glycosylation site (N-linked (GlcNAc...) asparagine). Positions 33–117 constitute an MANSC domain; that stretch reads SLEDVVIDIQ…LKPAKGLRSY (85 aa). 2 N-linked (GlcNAc...) asparagine glycosylation sites follow: asparagine 222 and asparagine 251. The tract at residues 236–279 is disordered; the sequence is HTTSATPKPAIRLPTNASVTPSGTSQPQLATTSPPVTTVTSQPP. Positions 250-265 are enriched in polar residues; it reads TNASVTPSGTSQPQLA. The span at 266 to 279 shows a compositional bias: low complexity; it reads TTSPPVTTVTSQPP. Residues asparagine 327 and asparagine 352 are each glycosylated (N-linked (GlcNAc...) asparagine). Residues 352–372 are disordered; that stretch reads NKTASWEGREASPGRSSQGNV. Residues 386 to 408 traverse the membrane as a helical segment; the sequence is LIGSLLFGVLFLVIGLVLLGRIL. The Cytoplasmic segment spans residues 409–431; the sequence is SESLRRKRYSRLDYLINGIYVDI.

The protein localises to the membrane. This chain is MANSC domain-containing protein 1 (MANSC1), found in Macaca fascicularis (Crab-eating macaque).